The following is a 470-amino-acid chain: Cupincin (470 aa).

An N-terminal signal peptide occupies residues 1–34 (MAKKKTSSSMARSQLAALLISLCFLSLASNAVGW). Residues 36-52 (RRGEREEEDERRRHGGE) are compositionally biased toward basic and acidic residues. Disordered stretches follow at residues 36–59 (RRGE…PYHL) and 240–261 (KSCS…PSSL). Cupin type-1 domains are found at residues 57-215 (YHLG…EELE) and 259-445 (SSLT…AREA). The N-linked (GlcNAc...) asparagine glycan is linked to asparagine 297. The disordered stretch occupies residues 330 to 368 (PHVSGGGSSERREREREHGRRREEEQGEEEHGERGEKAR). A compositionally biased stretch (basic and acidic residues) spans 338-367 (SERREREREHGRRREEEQGEEEHGERGEKA). Zn(2+)-binding residues include histidine 347, glutamate 352, and histidine 360.

It belongs to the 7S seed storage protein family. In terms of assembly, homotrimer. The cofactor is Zn(2+).

The protein resides in the secreted. In terms of biological role, seed storage protein. Globulin-like protein that acts as a zinc metalloprotease. Cleaves specifically between Leu-15 and Tyr-16 of insulin B chain, and Gln-1 and Leu-2 of neurotensin (NT) peptide in vitro. May play a role as an initiating endopeptidase in germinating seeds. This is Cupincin from Oryza sativa subsp. japonica (Rice).